The chain runs to 284 residues: Shikimate dehydrogenase (NADP(+)) (284 aa).

Shikimate is bound by residues 20 to 22 and serine 67; that span reads SIS. Lysine 71 functions as the Proton acceptor in the catalytic mechanism. Aspartate 83 provides a ligand contact to NADP(+). Positions 92 and 107 each coordinate shikimate. NADP(+) is bound by residues 129–133 and isoleucine 227; that span reads GAGGA. Tyrosine 229 serves as a coordination point for shikimate. Residue glycine 250 participates in NADP(+) binding.

It belongs to the shikimate dehydrogenase family. In terms of assembly, homodimer.

It catalyses the reaction shikimate + NADP(+) = 3-dehydroshikimate + NADPH + H(+). Its pathway is metabolic intermediate biosynthesis; chorismate biosynthesis; chorismate from D-erythrose 4-phosphate and phosphoenolpyruvate: step 4/7. Functionally, involved in the biosynthesis of the chorismate, which leads to the biosynthesis of aromatic amino acids. Catalyzes the reversible NADPH linked reduction of 3-dehydroshikimate (DHSA) to yield shikimate (SA). The sequence is that of Shikimate dehydrogenase (NADP(+)) from Streptococcus pneumoniae (strain 70585).